The primary structure comprises 541 residues: GPI alpha-1,2-mannosyltransferase 3 (541 aa).

An N-linked (GlcNAc...) asparagine glycan is attached at Asn18. Transmembrane regions (helical) follow at residues 53–73, 126–146, 182–202, 214–234, 245–265, 305–325, 330–350, 352–372, and 377–397; these read LVLFIIALRICNCFLVQTSFV, VHLLIWIPRLAQALLSAIADL, LTNTMETVLTIIALFYYPLEG, LVALAFIIRPTAVIPWIPLLF, DLILHQFLPVGFVTLSLSLII, GFPAVLGTHLPFFIHGCFLAP, IFLVTVLWTLLVYSMLSHKEF, FIYPVLPFCMVFCGYSLNNLK, and PALSFLFLSNMLLALYTGLVH. Asn417 carries an N-linked (GlcNAc...) asparagine glycan.

It belongs to the glycosyltransferase 22 family. PIGB subfamily.

It localises to the endoplasmic reticulum membrane. Its pathway is glycolipid biosynthesis; glycosylphosphatidylinositol-anchor biosynthesis. In terms of biological role, alpha-1,2-mannosyltransferase that catalyzes the transfer of the third mannose, via an alpha-1,2 bond, from a dolichol-phosphate-mannose (Dol-P-Man) to an alpha-D-Man-(1-&gt;6)-2-PEtn-alpha-D-Man-(1-&gt;4)-alpha-D-GlcN-(1-&gt;6)-(1-radyl,2-acyl-sn-glycero-3-phospho)-2-acyl-inositol intermediate to generate an alpha-D-Man-(1-&gt;2)-alpha-D-Man-(1-&gt;6)-2-PEtn-alpha-D-Man-(1-&gt;4)-alpha-D-GlcN-(1-&gt;6)-(1-radyl,2-acyl-sn-glycero-3-phospho)-2-acyl-inositol (also termed H6) and participates in the nineth step of the glycosylphosphatidylinositol-anchor biosynthesis. May also add the third mannose to an alpha-D-Man-(1-&gt;6)-alpha-D-Man-(1-&gt;4)-alpha-D-GlcN-(1-&gt;6)-(1-radyl,2-acyl-sn-glycero-3-phospho)-2-acyl-inositol (also termed H3) intermediate generating an alpha-D-Man-(1-&gt;2)-alpha-D-Man-(1-&gt;6)-alpha-D-Man-(1-&gt;4)-alpha-D-GlcN-(1-&gt;6)-(1-radyl,2-acyl-sn-glycero-3-phospho)-2-acyl-inositol (also termed H4). The sequence is that of GPI alpha-1,2-mannosyltransferase 3 from Bos taurus (Bovine).